A 174-amino-acid polypeptide reads, in one-letter code: RNA pyrophosphohydrolase (174 aa).

In terms of domain architecture, Nudix hydrolase spans 6–149; that stretch reads GYRPNVGIIL…KRDVYERALS (144 aa). Positions 38–59 match the Nudix box motif; it reads GGIKPGESPEAAMYRELLEEVG.

The protein belongs to the Nudix hydrolase family. RppH subfamily. The cofactor is a divalent metal cation.

Functionally, accelerates the degradation of transcripts by removing pyrophosphate from the 5'-end of triphosphorylated RNA, leading to a more labile monophosphorylated state that can stimulate subsequent ribonuclease cleavage. This Chromobacterium violaceum (strain ATCC 12472 / DSM 30191 / JCM 1249 / CCUG 213 / NBRC 12614 / NCIMB 9131 / NCTC 9757 / MK) protein is RNA pyrophosphohydrolase.